Here is a 324-residue protein sequence, read N- to C-terminus: Serpentine receptor class delta-30 (324 aa).

7 consecutive transmembrane segments (helical) span residues 5–25 (IIHS…MYLA), 38–58 (AIIT…FFVM), 83–103 (ACYV…IWMI), 124–144 (VFVA…WFSF), 176–196 (ITLI…YIWI), 227–247 (FQVF…SMFT), and 258–278 (AISV…ILFV). The interval 290–324 (KQPKPHPEMCGPIRSNTRTTSISVTNNSSHLSSAH) is disordered. The segment covering 303-324 (RSNTRTTSISVTNNSSHLSSAH) has biased composition (polar residues).

It belongs to the nematode receptor-like protein srd family.

The protein resides in the membrane. The chain is Serpentine receptor class delta-30 (srd-30) from Caenorhabditis elegans.